The primary structure comprises 557 residues: Potassium-transporting ATPase potassium-binding subunit (557 aa).

A run of 10 helical transmembrane segments spans residues 6–26 (IQLL…GLGL), 59–79 (ALSL…ILFF), 127–147 (AGLT…LLAL), 172–192 (LYVL…FGVV), 247–267 (ISNF…VFLY), 278–298 (WAIF…VWTF), 363–383 (IVFG…LLTV), 410–430 (ILGI…SVSV), 475–495 (VMIA…VLVI), and 520–540 (FYIL…FPVL).

It belongs to the KdpA family. As to quaternary structure, the system is composed of three essential subunits: KdpA, KdpB and KdpC.

The protein resides in the cell inner membrane. In terms of biological role, part of the high-affinity ATP-driven potassium transport (or Kdp) system, which catalyzes the hydrolysis of ATP coupled with the electrogenic transport of potassium into the cytoplasm. This subunit binds the periplasmic potassium ions and delivers the ions to the membrane domain of KdpB through an intramembrane tunnel. This chain is Potassium-transporting ATPase potassium-binding subunit, found in Leptospira interrogans serogroup Icterohaemorrhagiae serovar Lai (strain 56601).